Consider the following 189-residue polypeptide: Autophagy receptor ATG45 (189 aa).

The tract at residues 1 to 96 (MSNFLLVIPE…TNNILHFKDN (96 aa)) is binds glycogen. Positions 97 to 189 (EASQLMDIPL…AKKVKTYWNK (93 aa)) are required for sequestration into autophagosomes. S107 is modified (phosphoserine). Positions 127 to 130 (YVNL) match the ATG8 interaction motif (AIM) motif. S172 is subject to Phosphoserine. The interval 176-187 (LMCIAKKVKTYW) is may facilitate interactions with the autophagosome membrane.

In terms of assembly, interacts with ATG8.

Its subcellular location is the cytoplasm. The protein localises to the cytosol. The protein resides in the cytoplasmic vesicle. It is found in the autophagosome. Functionally, autophagy receptor for glycogen that facilitates the sequestration of glycogen assemblies into autophagosomes as part of bulk autophagy; the autophagy of glycogen (glycophagy) is stimulated during prolonged nitrogen starvation and during sporulation. The sequence is that of Autophagy receptor ATG45 from Saccharomyces cerevisiae (strain ATCC 204508 / S288c) (Baker's yeast).